The chain runs to 210 residues: Uracil phosphoribosyltransferase (210 aa).

5-phospho-alpha-D-ribose 1-diphosphate-binding positions include Arg78, Arg103, and 130–138 (DPMLATGGS). Uracil contacts are provided by residues Ile193 and 198–200 (GDA). Asp199 lines the 5-phospho-alpha-D-ribose 1-diphosphate pocket.

The protein belongs to the UPRTase family. The cofactor is Mg(2+).

It carries out the reaction UMP + diphosphate = 5-phospho-alpha-D-ribose 1-diphosphate + uracil. It participates in pyrimidine metabolism; UMP biosynthesis via salvage pathway; UMP from uracil: step 1/1. With respect to regulation, allosterically activated by GTP. In terms of biological role, catalyzes the conversion of uracil and 5-phospho-alpha-D-ribose 1-diphosphate (PRPP) to UMP and diphosphate. This is Uracil phosphoribosyltransferase from Chromobacterium violaceum (strain ATCC 12472 / DSM 30191 / JCM 1249 / CCUG 213 / NBRC 12614 / NCIMB 9131 / NCTC 9757 / MK).